Reading from the N-terminus, the 167-residue chain is MATNQFANRTRQTLAWITTCGERVRSWYEDYRFGSIDENAQLGRRGEQAAAQLLRRKGLNVIAESESDRAGEIDLIALRKRPRLIVFVEVKTLSTTRPGHPADRVDENKQARITRAALRYLKRKKLLGITCRFDVVAVWWPRDEPRPTRVEHYESAFNAVGVDSFYG.

It belongs to the UPF0102 family.

The chain is UPF0102 protein RB9115 from Rhodopirellula baltica (strain DSM 10527 / NCIMB 13988 / SH1).